A 64-amino-acid chain; its full sequence is DNA-binding protein 7d (64 aa).

An N6-methyllysine mark is found at lysine 5, lysine 7, lysine 61, lysine 63, and lysine 64.

This sequence belongs to the 7 kDa DNA-binding/endoribonuclease P2 family. In terms of assembly, monomer.

It localises to the cytoplasm. In terms of biological role, can constrain negative DNA supercoils. May be involved in maintaining the integrity of the genome at high temperature. Stimulates the Holliday junction cleavage activity of Hjc. The sequence is that of DNA-binding protein 7d (sso7d) from Saccharolobus solfataricus (strain ATCC 35092 / DSM 1617 / JCM 11322 / P2) (Sulfolobus solfataricus).